Here is a 297-residue protein sequence, read N- to C-terminus: Ribosomal RNA small subunit methyltransferase A (297 aa).

The S-adenosyl-L-methionine site is built by N31, L33, G58, E79, D104, and N129.

Belongs to the class I-like SAM-binding methyltransferase superfamily. rRNA adenine N(6)-methyltransferase family. RsmA subfamily.

Its subcellular location is the cytoplasm. It carries out the reaction adenosine(1518)/adenosine(1519) in 16S rRNA + 4 S-adenosyl-L-methionine = N(6)-dimethyladenosine(1518)/N(6)-dimethyladenosine(1519) in 16S rRNA + 4 S-adenosyl-L-homocysteine + 4 H(+). In terms of biological role, specifically dimethylates two adjacent adenosines (A1518 and A1519) in the loop of a conserved hairpin near the 3'-end of 16S rRNA in the 30S particle. May play a critical role in biogenesis of 30S subunits. This Staphylococcus aureus (strain MRSA252) protein is Ribosomal RNA small subunit methyltransferase A.